The chain runs to 655 residues: uncharacterized protein (655 aa).

A helical membrane pass occupies residues 5–25; sequence IIIIIFIVINFINIIISSITF. Disordered stretches follow at residues 337-363 and 484-525; these read NSDY…NNNN and DKIG…SDNS. A compositionally biased stretch (low complexity) spans 515–524; the sequence is DNNSIGSSDN. A helical membrane pass occupies residues 588–608; that stretch reads ILAVTISAIGIICVALLLTVV.

It localises to the membrane. This is an uncharacterized protein from Dictyostelium discoideum (Social amoeba).